Here is a 435-residue protein sequence, read N- to C-terminus: Legumain (435 aa).

Residues 1 to 17 form the signal peptide; the sequence is MTWRVAVLLSLVLGAGA. Asparagine 93 carries an N-linked (GlcNAc...) asparagine glycan. Histidine 150 is an active-site residue. An N-linked (GlcNAc...) asparagine glycan is attached at asparagine 169. The active-site Nucleophile is cysteine 191. N-linked (GlcNAc...) asparagine glycosylation is found at asparagine 215, asparagine 265, and asparagine 274. The propeptide occupies 326–435; the sequence is NMKESQVLVG…AMDKVCLSHY (110 aa). 2 disulfide bridges follow: cysteine 380–cysteine 414 and cysteine 392–cysteine 431.

This sequence belongs to the peptidase C13 family. In terms of assembly, homodimer before autocatalytic removal of the propeptide. Monomer after autocatalytic processing. May interact with integrins. Activated by autocatalytic processing at pH 4. As to expression, detected in kidney cortex (at protein level).

The protein localises to the lysosome. It catalyses the reaction Hydrolysis of proteins and small molecule substrates at -Asn-|-Xaa- bonds.. Its function is as follows. Has a strict specificity for hydrolysis of asparaginyl bonds. Can also cleave aspartyl bonds slowly, especially under acidic conditions. Involved in the processing of proteins for MHC class II antigen presentation in the lysosomal/endosomal system. Also involved in MHC class I antigen presentation in cross-presenting dendritic cells by mediating cleavage and maturation of Perforin-2 (MPEG1), thereby promoting antigen translocation in the cytosol. Required for normal lysosomal protein degradation in renal proximal tubules. Required for normal degradation of internalized EGFR. Plays a role in the regulation of cell proliferation via its role in EGFR degradation. The polypeptide is Legumain (Lgmn) (Rattus norvegicus (Rat)).